The sequence spans 309 residues: Probable manganese-dependent inorganic pyrophosphatase (309 aa).

Mn(2+) is bound by residues H9, D13, D15, D75, H97, and D149.

It belongs to the PPase class C family. Mn(2+) is required as a cofactor.

It is found in the cytoplasm. The enzyme catalyses diphosphate + H2O = 2 phosphate + H(+). The polypeptide is Probable manganese-dependent inorganic pyrophosphatase (Bacillus cereus (strain AH187)).